The sequence spans 258 residues: CDP-diacylglycerol pyrophosphatase (258 aa).

A helical membrane pass occupies residues 10–30 (YLLTLLILIILAAGLIYKLRF).

The protein belongs to the Cdh family.

Its subcellular location is the cell inner membrane. The catalysed reaction is a CDP-1,2-diacyl-sn-glycerol + H2O = a 1,2-diacyl-sn-glycero-3-phosphate + CMP + 2 H(+). It participates in phospholipid metabolism; CDP-diacylglycerol degradation; phosphatidate from CDP-diacylglycerol: step 1/1. This is CDP-diacylglycerol pyrophosphatase (cdh) from Yersinia pestis.